We begin with the raw amino-acid sequence, 490 residues long: Betaine aldehyde dehydrogenase (490 aa).

3 residues coordinate K(+): threonine 26, isoleucine 27, and aspartate 93. NAD(+) is bound at residue 150–152 (GAW). The active-site Charge relay system is lysine 162. 176 to 179 (KPSE) contacts NAD(+). Valine 180 contacts K(+). An NAD(+)-binding site is contributed by 230–233 (GVAS). Leucine 246 lines the K(+) pocket. Glutamate 252 serves as the catalytic Proton acceptor. The NAD(+) site is built by glycine 254, cysteine 286, and glutamate 387. Cysteine 286 serves as the catalytic Nucleophile. Position 286 is a cysteine sulfenic acid (-SOH) (cysteine 286). K(+) contacts are provided by lysine 457 and glycine 460. Residue glutamate 464 is the Charge relay system of the active site.

It belongs to the aldehyde dehydrogenase family. In terms of assembly, dimer of dimers. The cofactor is K(+).

The catalysed reaction is betaine aldehyde + NAD(+) + H2O = glycine betaine + NADH + 2 H(+). It functions in the pathway amine and polyamine biosynthesis; betaine biosynthesis via choline pathway; betaine from betaine aldehyde: step 1/1. In terms of biological role, involved in the biosynthesis of the osmoprotectant glycine betaine. Catalyzes the irreversible oxidation of betaine aldehyde to the corresponding acid. The polypeptide is Betaine aldehyde dehydrogenase (Escherichia coli O7:K1 (strain IAI39 / ExPEC)).